Reading from the N-terminus, the 615-residue chain is UvrABC system protein C (615 aa).

The GIY-YIG domain maps to 14-91; it reads TSPGCYIHKD…IKENKPKYNI (78 aa). Residues 196 to 231 enclose the UVR domain; that stretch reads NKIIDELKGKMAAAAQTMEFERAAEYRDLIQAIGTL.

Belongs to the UvrC family. As to quaternary structure, interacts with UvrB in an incision complex.

The protein resides in the cytoplasm. Functionally, the UvrABC repair system catalyzes the recognition and processing of DNA lesions. UvrC both incises the 5' and 3' sides of the lesion. The N-terminal half is responsible for the 3' incision and the C-terminal half is responsible for the 5' incision. In Streptococcus pneumoniae (strain JJA), this protein is UvrABC system protein C.